The chain runs to 270 residues: 4-hydroxy-tetrahydrodipicolinate reductase (270 aa).

NAD(+) is bound by residues 11–16 and glutamate 37; that span reads GAGGRM. Position 38 (arginine 38) interacts with NADP(+). Residues 101 to 103 and 125 to 128 contribute to the NAD(+) site; these read GTT and APNM. Residue histidine 158 is the Proton donor/acceptor of the active site. Histidine 159 contacts (S)-2,3,4,5-tetrahydrodipicolinate. Catalysis depends on lysine 162, which acts as the Proton donor. 168–169 is a binding site for (S)-2,3,4,5-tetrahydrodipicolinate; that stretch reads GT.

This sequence belongs to the DapB family.

The protein localises to the cytoplasm. The enzyme catalyses (S)-2,3,4,5-tetrahydrodipicolinate + NAD(+) + H2O = (2S,4S)-4-hydroxy-2,3,4,5-tetrahydrodipicolinate + NADH + H(+). It carries out the reaction (S)-2,3,4,5-tetrahydrodipicolinate + NADP(+) + H2O = (2S,4S)-4-hydroxy-2,3,4,5-tetrahydrodipicolinate + NADPH + H(+). Its pathway is amino-acid biosynthesis; L-lysine biosynthesis via DAP pathway; (S)-tetrahydrodipicolinate from L-aspartate: step 4/4. Catalyzes the conversion of 4-hydroxy-tetrahydrodipicolinate (HTPA) to tetrahydrodipicolinate. This is 4-hydroxy-tetrahydrodipicolinate reductase from Shewanella sp. (strain MR-4).